A 145-amino-acid chain; its full sequence is Large ribosomal subunit protein uL15 (145 aa).

The segment at 23–51 (IGSGWGKTGGRGHKGQKSRSGGKIRKSFE) is disordered. Over residues 32–47 (GRGHKGQKSRSGGKIR) the composition is skewed to basic residues.

This sequence belongs to the universal ribosomal protein uL15 family. In terms of assembly, part of the 50S ribosomal subunit.

Its function is as follows. Binds to the 23S rRNA. The chain is Large ribosomal subunit protein uL15 from Buchnera aphidicola subsp. Cinara cedri (strain Cc).